The following is a 194-amino-acid chain: Type II secretion system protein H (194 aa).

Positions 1–6 (MTATRG) are cleaved as a propeptide — leader sequence. The residue at position 7 (F7) is an N-methylphenylalanine. The chain crosses the membrane as a helical span at residues 12–32 (ILLVLVLVSASAVAVIATFPV).

The protein belongs to the GSP H family. In terms of assembly, type II secretion is composed of four main components: the outer membrane complex, the inner membrane complex, the cytoplasmic secretion ATPase and the periplasm-spanning pseudopilus. Interacts with core component EpsG. Post-translationally, cleaved by prepilin peptidase. In terms of processing, methylated by prepilin peptidase at the amino group of the N-terminal phenylalanine once the leader sequence is cleaved by prepilin peptidase.

Its subcellular location is the cell inner membrane. Its function is as follows. Component of the type II secretion system required for the energy-dependent secretion of extracellular factors such as proteases and toxins from the periplasm. Part of the pseudopilus tip complex that is critical for the recognition and binding of secretion substrates. The protein is Type II secretion system protein H (epsH) of Vibrio cholerae serotype O1 (strain ATCC 39315 / El Tor Inaba N16961).